Reading from the N-terminus, the 160-residue chain is uncharacterized protein (160 aa).

This is an uncharacterized protein from Methanocaldococcus jannaschii (strain ATCC 43067 / DSM 2661 / JAL-1 / JCM 10045 / NBRC 100440) (Methanococcus jannaschii).